Reading from the N-terminus, the 572-residue chain is Proline--tRNA ligase (572 aa).

Belongs to the class-II aminoacyl-tRNA synthetase family. ProS type 1 subfamily. In terms of assembly, homodimer.

It is found in the cytoplasm. The enzyme catalyses tRNA(Pro) + L-proline + ATP = L-prolyl-tRNA(Pro) + AMP + diphosphate. Its function is as follows. Catalyzes the attachment of proline to tRNA(Pro) in a two-step reaction: proline is first activated by ATP to form Pro-AMP and then transferred to the acceptor end of tRNA(Pro). As ProRS can inadvertently accommodate and process non-cognate amino acids such as alanine and cysteine, to avoid such errors it has two additional distinct editing activities against alanine. One activity is designated as 'pretransfer' editing and involves the tRNA(Pro)-independent hydrolysis of activated Ala-AMP. The other activity is designated 'posttransfer' editing and involves deacylation of mischarged Ala-tRNA(Pro). The misacylated Cys-tRNA(Pro) is not edited by ProRS. The chain is Proline--tRNA ligase from Escherichia coli O157:H7.